A 784-amino-acid chain; its full sequence is E3 ubiquitin-protein ligase RNF43 (784 aa).

The signal sequence occupies residues 1–23 (MSGGHQLQLAVLWPWLLMATLHA). Residues 24 to 197 (GFGHTGRVLA…LKEPPAGANY (174 aa)) lie on the Extracellular side of the membrane. N-linked (GlcNAc...) asparagine glycosylation is found at Asn62 and Asn92. Residues Cys91 and Cys119 are joined by a disulfide bond. A helical transmembrane segment spans residues 198–218 (DVWILLTVVGTVFVIILASVL). Over 219-784 (RIRCRPHHSR…ELEELCEQAV (566 aa)) the chain is Cytoplasmic. An RING-type; atypical zinc finger spans residues 272-313 (CAICLEEFSEGQELRVISCLHEFHRTCVDPWLYQHRTCPLCM). Disordered regions lie at residues 364–407 (TSVA…HLAV), 459–478 (ADGPASDSSSGPCHGSSSDS), and 516–671 (DLQG…SLPP). Residues 386 to 395 (RHQRLPRTSH) show a composition bias toward basic residues. Positions 464 to 478 (SDSSSGPCHGSSSDS) are enriched in low complexity. Residues 548-568 (IHYHRHRHHHYKRQFQWHGRK) show a composition bias toward basic residues. Residues 583–608 (SHTQLEPSLPDQQLITPNPTASSMLP) show a composition bias toward polar residues. A compositionally biased stretch (low complexity) spans 618–629 (EPAPGLAEASSP).

The protein belongs to the ZNRF3 family. Interacts with AKAP8L, NONO and SFPQ. Interacts with FZD5. Identified in a complex composed of RNF43, LGR5 and RSPO1. Interacts with RSPO2. Interacts with LMBR1L. Post-translationally, autoubiquitinated. Expressed in crypt base columnar cells of small intestinal epithelium. Crypt base columnar cells are small cycling cells residing between the terminally differentiated Paneth cells at crypt bottoms. Colocalizes with Lgr5-positive stem cells.

Its subcellular location is the cell membrane. The protein localises to the endoplasmic reticulum membrane. It localises to the nucleus envelope. It carries out the reaction S-ubiquitinyl-[E2 ubiquitin-conjugating enzyme]-L-cysteine + [acceptor protein]-L-lysine = [E2 ubiquitin-conjugating enzyme]-L-cysteine + N(6)-ubiquitinyl-[acceptor protein]-L-lysine.. It participates in protein modification; protein ubiquitination. Functionally, E3 ubiquitin-protein ligase that acts as a negative regulator of the Wnt signaling pathway by mediating the ubiquitination, endocytosis and subsequent degradation of Wnt receptor complex components Frizzled. Acts on both canonical and non-canonical Wnt signaling pathway. Along with RSPO2 and ZNRF3, constitutes a master switch that governs limb specification. The sequence is that of E3 ubiquitin-protein ligase RNF43 (Rnf43) from Mus musculus (Mouse).